The sequence spans 273 residues: MNLMAERSLENAVGEKMNATASSIKMRGEKVCVFYGEKQALFDVDLDIPEKMVTALIGPSGCGKSTFLRSLNRMNDTIEGCRIAGRITLDNEDIYDPRLDVVELRARVGMVFQKPNPFPKSIYENVAYGPRIHGLARSKAELEEIVVTSLQKASLFEEVKDRLHDAGTGLSGGQQQRLCIARAIAVSPEVILMDEPCSALDPIATAKVEELIDELRQNFTIVIVTHSMQQAARVSQRTAMFHLGNLVEVGDTEMMFTAPTEKRTQDYITGRFG.

In terms of domain architecture, ABC transporter spans 26 to 268 (MRGEKVCVFY…PTEKRTQDYI (243 aa)). 58–65 (GPSGCGKS) is an ATP binding site.

It belongs to the ABC transporter superfamily. Phosphate importer (TC 3.A.1.7) family. As to quaternary structure, the complex is composed of two ATP-binding proteins (PstB), two transmembrane proteins (PstC and PstA) and a solute-binding protein (PstS).

It is found in the cell inner membrane. The enzyme catalyses phosphate(out) + ATP + H2O = ADP + 2 phosphate(in) + H(+). Functionally, part of the ABC transporter complex PstSACB involved in phosphate import. Responsible for energy coupling to the transport system. This Brucella abortus (strain 2308) protein is Phosphate import ATP-binding protein PstB.